The chain runs to 262 residues: Pyridoxine 5'-phosphate synthase (262 aa).

Asparagine 6 contributes to the 3-amino-2-oxopropyl phosphate binding site. 8-9 (DH) provides a ligand contact to 1-deoxy-D-xylulose 5-phosphate. Arginine 17 contributes to the 3-amino-2-oxopropyl phosphate binding site. Histidine 43 functions as the Proton acceptor in the catalytic mechanism. 2 residues coordinate 1-deoxy-D-xylulose 5-phosphate: arginine 45 and histidine 50. The active-site Proton acceptor is the glutamate 70. 1-deoxy-D-xylulose 5-phosphate is bound at residue threonine 102. Residue histidine 215 is the Proton donor of the active site. 3-amino-2-oxopropyl phosphate is bound by residues glycine 216 and 237–238 (GH).

The protein belongs to the PNP synthase family. In terms of assembly, homooctamer; tetramer of dimers.

Its subcellular location is the cytoplasm. It catalyses the reaction 3-amino-2-oxopropyl phosphate + 1-deoxy-D-xylulose 5-phosphate = pyridoxine 5'-phosphate + phosphate + 2 H2O + H(+). It functions in the pathway cofactor biosynthesis; pyridoxine 5'-phosphate biosynthesis; pyridoxine 5'-phosphate from D-erythrose 4-phosphate: step 5/5. In terms of biological role, catalyzes the complicated ring closure reaction between the two acyclic compounds 1-deoxy-D-xylulose-5-phosphate (DXP) and 3-amino-2-oxopropyl phosphate (1-amino-acetone-3-phosphate or AAP) to form pyridoxine 5'-phosphate (PNP) and inorganic phosphate. The sequence is that of Pyridoxine 5'-phosphate synthase from Helicobacter pylori (strain HPAG1).